The following is a 241-amino-acid chain: Probable phosphatase Cthe_0111 (241 aa).

Positions 8, 10, 16, 41, 74, 102, 132, 192, and 194 each coordinate Zn(2+).

Belongs to the PHP family. Zn(2+) serves as cofactor.

In Acetivibrio thermocellus (strain ATCC 27405 / DSM 1237 / JCM 9322 / NBRC 103400 / NCIMB 10682 / NRRL B-4536 / VPI 7372) (Clostridium thermocellum), this protein is Probable phosphatase Cthe_0111.